The sequence spans 183 residues: Ribosome rescue factor SmrB (183 aa).

The Smr domain maps to 98-173; it reads LDLHGLTQLQ…GDAALLVLIE (76 aa).

This sequence belongs to the SmrB family. Associates with collided ribosomes, but not with correctly translating polysomes.

Functionally, acts as a ribosome collision sensor. Detects stalled/collided disomes (pairs of ribosomes where the leading ribosome is stalled and a second ribosome has collided with it) and endonucleolytically cleaves mRNA at the 5' boundary of the stalled ribosome. Stalled/collided disomes form a new interface (primarily via the 30S subunits) that binds SmrB. Cleaved mRNA becomes available for tmRNA ligation, leading to ribosomal subunit dissociation and rescue of stalled ribosomes. This is Ribosome rescue factor SmrB from Escherichia coli (strain 55989 / EAEC).